We begin with the raw amino-acid sequence, 462 residues long: L-seryl-tRNA(Sec) selenium transferase (462 aa).

K295 carries the post-translational modification N6-(pyridoxal phosphate)lysine.

This sequence belongs to the SelA family. Homodecamer; pentamer of dimers. Binds only one seryl-tRNA(Sec) per dimer. The cofactor is pyridoxal 5'-phosphate.

It is found in the cytoplasm. The catalysed reaction is L-seryl-tRNA(Sec) + selenophosphate + H(+) = L-selenocysteinyl-tRNA(Sec) + phosphate. It participates in aminoacyl-tRNA biosynthesis; selenocysteinyl-tRNA(Sec) biosynthesis; selenocysteinyl-tRNA(Sec) from L-seryl-tRNA(Sec) (bacterial route): step 1/1. Converts seryl-tRNA(Sec) to selenocysteinyl-tRNA(Sec) required for selenoprotein biosynthesis. The polypeptide is L-seryl-tRNA(Sec) selenium transferase (Klebsiella pneumoniae subsp. pneumoniae (strain ATCC 700721 / MGH 78578)).